Here is a 230-residue protein sequence, read N- to C-terminus: Cysteine S-methyltransferase OspZ (230 aa).

The interval 49–52 (GITR) is interaction with host proteins TAB2, TAB3 and ZRANB3. S-adenosyl-L-methionine contacts are provided by A92, S98, R107, Q111, Y204, and E208.

This sequence belongs to the NleE/OspZ family. Monomer.

It is found in the secreted. The protein resides in the host cytoplasm. Its subcellular location is the host nucleus. The catalysed reaction is L-cysteinyl-[protein] + S-adenosyl-L-methionine = S-methyl-L-cysteinyl-[protein] + S-adenosyl-L-homocysteine + H(+). Its function is as follows. Cysteine methyltransferase effector that inhibits host cell NF-kappa-B activation by preventing nuclear translocation of host protein RELA/p65. Acts by mediating cysteine methylation of host proteins TAB2 and TAB3: methylation of a conserved cysteine residue of the RanBP2-type zinc finger (NZF) of TAB2 and TAB3 disrupts zinc-binding, thereby inactivating the ubiquitin chain-binding activity of TAB2 and TAB3, leading to NF-kappa-B inactivation. Also mediates cysteine methylation of host protein ZRANB3, inactivating its ability to bind ubiquitin chains. The sequence is that of Cysteine S-methyltransferase OspZ from Shigella boydii.